The chain runs to 326 residues: ELMO domain-containing protein 1 (326 aa).

Positions 133 to 306 constitute an ELMO domain; that stretch reads QHEEMLLKLW…KFRKRIIKQL (174 aa).

In terms of biological role, acts as a GTPase-activating protein (GAP) toward guanine nucleotide exchange factors like ARL2, ARL3, ARF1 and ARF6, but not for GTPases outside the Arf family. This chain is ELMO domain-containing protein 1 (ELMOD1), found in Pongo abelii (Sumatran orangutan).